The sequence spans 612 residues: UvrABC system protein C (612 aa).

The 80-residue stretch at Ala13–Thr92 folds into the GIY-YIG domain. In terms of domain architecture, UVR spans Lys204–Val239.

The protein belongs to the UvrC family. Interacts with UvrB in an incision complex.

It is found in the cytoplasm. In terms of biological role, the UvrABC repair system catalyzes the recognition and processing of DNA lesions. UvrC both incises the 5' and 3' sides of the lesion. The N-terminal half is responsible for the 3' incision and the C-terminal half is responsible for the 5' incision. The chain is UvrABC system protein C from Lachnospira eligens (strain ATCC 27750 / DSM 3376 / VPI C15-48 / C15-B4) (Eubacterium eligens).